The following is a 36-amino-acid chain: Pancreatic polypeptide (36 aa).

Phe-36 carries the phenylalanine amide modification.

The protein belongs to the NPY family.

It localises to the secreted. Hormone secreted by pancreatic cells that acts as a regulator of pancreatic and gastrointestinal functions. The chain is Pancreatic polypeptide (ppy) from Rana temporaria (European common frog).